Consider the following 386-residue polypeptide: Succinate--CoA ligase [ADP-forming] subunit beta (386 aa).

The ATP-grasp domain occupies 9 to 244 (KAVLRSYGVS…LEEEDSKEIE (236 aa)). ATP contacts are provided by residues K46, 53-55 (GRG), E99, C102, and E107. Residues N199 and D213 each coordinate Mg(2+). Substrate-binding positions include N264 and 321-323 (GIM).

This sequence belongs to the succinate/malate CoA ligase beta subunit family. Heterotetramer of two alpha and two beta subunits. The cofactor is Mg(2+).

The catalysed reaction is succinate + ATP + CoA = succinyl-CoA + ADP + phosphate. It catalyses the reaction GTP + succinate + CoA = succinyl-CoA + GDP + phosphate. It functions in the pathway carbohydrate metabolism; tricarboxylic acid cycle; succinate from succinyl-CoA (ligase route): step 1/1. Its function is as follows. Succinyl-CoA synthetase functions in the citric acid cycle (TCA), coupling the hydrolysis of succinyl-CoA to the synthesis of either ATP or GTP and thus represents the only step of substrate-level phosphorylation in the TCA. The beta subunit provides nucleotide specificity of the enzyme and binds the substrate succinate, while the binding sites for coenzyme A and phosphate are found in the alpha subunit. The sequence is that of Succinate--CoA ligase [ADP-forming] subunit beta from Bacillus mycoides (strain KBAB4) (Bacillus weihenstephanensis).